The primary structure comprises 271 residues: Undecaprenyl-diphosphatase (271 aa).

Helical transmembrane passes span 5–25, 45–65, 86–106, 114–134, 149–169, 189–209, 226–246, and 251–271; these read YALF…FLPV, AATF…AVFW, TLSL…GLAI, LFGP…LIIA, ISYK…WPGF, AAEF…GLDL, VGFI…LALI, and FIPF…VFVA.

This sequence belongs to the UppP family.

The protein resides in the cell inner membrane. It catalyses the reaction di-trans,octa-cis-undecaprenyl diphosphate + H2O = di-trans,octa-cis-undecaprenyl phosphate + phosphate + H(+). In terms of biological role, catalyzes the dephosphorylation of undecaprenyl diphosphate (UPP). Confers resistance to bacitracin. The polypeptide is Undecaprenyl-diphosphatase (Aeromonas hydrophila subsp. hydrophila (strain ATCC 7966 / DSM 30187 / BCRC 13018 / CCUG 14551 / JCM 1027 / KCTC 2358 / NCIMB 9240 / NCTC 8049)).